A 206-amino-acid polypeptide reads, in one-letter code: uncharacterized protein (206 aa).

Positions 1–17 are cleaved as a signal peptide; the sequence is MKGKILFALFLSAGVIA. Cysteine 18 carries N-palmitoyl cysteine lipidation. Cysteine 18 is lipidated: S-diacylglycerol cysteine. Positions 21–58 form a coiled coil; the sequence is ASQAAKQQEVKVAKAETKTKKKESKAEKFRKALAAQDK. Positions 97–201 constitute a Cytochrome c domain; the sequence is GDWRKGESLA…DIVAYLHDPE (105 aa). The heme c site is built by cysteine 127, cysteine 130, and histidine 131.

The protein resides in the cell membrane. This is an uncharacterized protein from Aquifex aeolicus (strain VF5).